Reading from the N-terminus, the 1014-residue chain is UvrABC system protein A (1014 aa).

Position 32-39 (32-39 (GLSGSGKS)) interacts with ATP. ABC transporter domains lie at 314-592 (WSHG…AESQ) and 612-941 (QDPS…KFLR). 645 to 652 (GVSGSGKS) is an ATP binding site. The C4-type zinc finger occupies 744–770 (CENCAGDGTIKIEMNFLPDVYVPCEVC). Residues 976–995 (TKTVTGTAAKKATATRTAKT) show a composition bias toward low complexity. Residues 976–1014 (TKTVTGTAAKKATATRTAKTAVKKAAKPAAKKTTRTSKA) are disordered. Residues 996–1014 (AVKKAAKPAAKKTTRTSKA) are compositionally biased toward basic residues.

It belongs to the ABC transporter superfamily. UvrA family. In terms of assembly, forms a heterotetramer with UvrB during the search for lesions.

It localises to the cytoplasm. Functionally, the UvrABC repair system catalyzes the recognition and processing of DNA lesions. UvrA is an ATPase and a DNA-binding protein. A damage recognition complex composed of 2 UvrA and 2 UvrB subunits scans DNA for abnormalities. When the presence of a lesion has been verified by UvrB, the UvrA molecules dissociate. The chain is UvrABC system protein A from Streptomyces coelicolor (strain ATCC BAA-471 / A3(2) / M145).